The following is a 617-amino-acid chain: Thioredoxin reductase (617 aa).

FAD is bound by residues 127–128 (PG), 147–150 (DYVK), 163–164 (TC), 168–172 (GCVPK), alanine 237, aspartate 433, and 440–442 (ELA). An intrachain disulfide couples cysteine 164 to cysteine 169. The tract at residues 514–528 (HRQKHIRAQKDEYDL) is loop important for the interaction with TRX1. Histidine 585 contributes to the FAD binding site. Histidine 585 functions as the Proton acceptor in the catalytic mechanism. The cysteines at positions 611 and 616 are disulfide-linked.

Belongs to the class-I pyridine nucleotide-disulfide oxidoreductase family. In terms of assembly, homodimer. FAD serves as cofactor.

It is found in the mitochondrion. It localises to the cytoplasm. It carries out the reaction [thioredoxin]-dithiol + NADP(+) = [thioredoxin]-disulfide + NADPH + H(+). Catalyzes the transfer of electrons from NADPH to thioredoxins TRX1, TRX2 and TRX3, which in turn act as reductants of disulfide containing proteins. Able to reduce nitroglutathione (GSNO), a compound involved in the transport of nitric oxide (NO); however, TRX1 is more efficient in reducing GSNO. Has no catalytic activity towards oxidized glutathione (GSSG). The polypeptide is Thioredoxin reductase (Plasmodium falciparum (isolate 3D7)).